The primary structure comprises 146 residues: 3-dehydroquinate dehydratase (146 aa).

Residue Tyr22 is the Proton acceptor of the active site. Substrate contacts are provided by Asn74, His80, and Asp87. The active-site Proton donor is the His100. Residues 101–102 (LS) and Arg111 contribute to the substrate site.

It belongs to the type-II 3-dehydroquinase family. As to quaternary structure, homododecamer.

It carries out the reaction 3-dehydroquinate = 3-dehydroshikimate + H2O. The protein operates within metabolic intermediate biosynthesis; chorismate biosynthesis; chorismate from D-erythrose 4-phosphate and phosphoenolpyruvate: step 3/7. Catalyzes a trans-dehydration via an enolate intermediate. This chain is 3-dehydroquinate dehydratase, found in Clostridium perfringens (strain 13 / Type A).